We begin with the raw amino-acid sequence, 199 residues long: RNA pyrophosphohydrolase (199 aa).

In terms of domain architecture, Nudix hydrolase spans 6–154 (GYRPNVGIVL…KREVYELALS (149 aa)). A Nudix box motif is present at residues 38 to 59 (GGIQHGESPEQAMYRELHEEVG).

Belongs to the Nudix hydrolase family. RppH subfamily. A divalent metal cation serves as cofactor.

In terms of biological role, accelerates the degradation of transcripts by removing pyrophosphate from the 5'-end of triphosphorylated RNA, leading to a more labile monophosphorylated state that can stimulate subsequent ribonuclease cleavage. The chain is RNA pyrophosphohydrolase from Polynucleobacter asymbioticus (strain DSM 18221 / CIP 109841 / QLW-P1DMWA-1) (Polynucleobacter necessarius subsp. asymbioticus).